The chain runs to 132 residues: Large-conductance mechanosensitive channel (132 aa).

The next 2 helical transmembrane spans lie at 11 to 31 (FISR…GAFG) and 75 to 95 (GSFL…FLLV).

This sequence belongs to the MscL family. Homopentamer.

Its subcellular location is the cell inner membrane. Functionally, channel that opens in response to stretch forces in the membrane lipid bilayer. May participate in the regulation of osmotic pressure changes within the cell. The chain is Large-conductance mechanosensitive channel from Synechococcus sp. (strain JA-3-3Ab) (Cyanobacteria bacterium Yellowstone A-Prime).